The sequence spans 84 residues: Putative defensin-like protein 139 (84 aa).

An N-terminal signal peptide occupies residues 1–28; sequence MEPSNQIFFYLRRSKLLSGLGEIRMAKG. 4 disulfide bridges follow: cysteine 37/cysteine 81, cysteine 46/cysteine 65, cysteine 51/cysteine 75, and cysteine 55/cysteine 77.

This sequence belongs to the DEFL family.

It is found in the secreted. This Arabidopsis thaliana (Mouse-ear cress) protein is Putative defensin-like protein 139 (LCR7).